A 329-amino-acid polypeptide reads, in one-letter code: Tetraacyldisaccharide 4'-kinase (329 aa).

S58 to T65 is a binding site for ATP.

Belongs to the LpxK family.

It carries out the reaction a lipid A disaccharide + ATP = a lipid IVA + ADP + H(+). The protein operates within glycolipid biosynthesis; lipid IV(A) biosynthesis; lipid IV(A) from (3R)-3-hydroxytetradecanoyl-[acyl-carrier-protein] and UDP-N-acetyl-alpha-D-glucosamine: step 6/6. Its function is as follows. Transfers the gamma-phosphate of ATP to the 4'-position of a tetraacyldisaccharide 1-phosphate intermediate (termed DS-1-P) to form tetraacyldisaccharide 1,4'-bis-phosphate (lipid IVA). This Idiomarina loihiensis (strain ATCC BAA-735 / DSM 15497 / L2-TR) protein is Tetraacyldisaccharide 4'-kinase.